Here is a 570-residue protein sequence, read N- to C-terminus: MKINRQQYAESYGPTVGDQVRLADTDLWIEVEKDTTYGDEAVNFGGGKVLREGMGENGTYTRTENVLDLLLTNALILDYTGIYKADIGVKDGYIVGIGKGGNPDIMDGVTPNMIVGTATEVIAAEGKIVTAGGIDTHVHFINPDQVDVALANGITTLFGGGTGPAEGSKATTVTPGPWNIEKMLKSTEGLPINVGILGKGHGSSIAPIMEQIDAGAAGLKIHEDWGATPASIDRSLTVADEADVQVAIHSDTLNEAGFLEDTLRAINGRVIHSFHVEGAGGGHAPDIMAMAGHPNVLPSSTNPTRPFTVNTIDEHLDMLMVCHHLKQNIPEDVAFADSRIRPETIAAEDILHDLGIISMMSTDALAMGRAGEMVLRTWQTADKMKKQRGPLAEEKNGSDNFRAKRYVSKYTINPAIAQGIAHEVGSIEEGKFADLVLWEPKFFGVKADRVIKGGIIAYAQIGDPSASIPTPQPVMGRRMYGTVGDLIHDTNITFMSKSSIQQGVPAKLGLKRRIGTVKNCRNIGKKDMKWNDVTTDIDINPETYEVKVDGEVLTCEPVKELPMAQRYFLF.

The Urease domain maps to 132 to 570 (GGIDTHVHFI…LPMAQRYFLF (439 aa)). 2 residues coordinate Ni(2+): His-137 and His-139. Residues His-139 and Ala-170 each contribute to the substrate site. Ni(2+) is bound at residue Lys-220. Lys-220 carries the N6-carboxylysine modification. The substrate site is built by His-222 and His-249. Ni(2+)-binding residues include His-249 and His-275. Residue His-323 is the Proton donor of the active site. Residue Asp-363 participates in Ni(2+) binding. Ala-366 is a binding site for substrate.

It belongs to the metallo-dependent hydrolases superfamily. Urease alpha subunit family. Heterotrimer of UreA (gamma), UreB (beta) and UreC (alpha) subunits. Three heterotrimers associate to form the active enzyme. Ni cation serves as cofactor. In terms of processing, carboxylation allows a single lysine to coordinate two nickel ions.

Its subcellular location is the cytoplasm. It carries out the reaction urea + 2 H2O + H(+) = hydrogencarbonate + 2 NH4(+). Its pathway is nitrogen metabolism; urea degradation; CO(2) and NH(3) from urea (urease route): step 1/1. Inhibited by fluoride. This Sporosarcina pasteurii (Bacillus pasteurii) protein is Urease subunit alpha.